The following is a 563-amino-acid chain: NAD(P)H-quinone oxidoreductase chain 4 (563 aa).

Transmembrane regions (helical) follow at residues phenylalanine 25 to isoleucine 45, tryptophan 56 to glycine 76, valine 90 to proline 110, leucine 111 to phenylalanine 131, proline 133 to valine 153, leucine 157 to tryptophan 177, phenylalanine 189 to phenylalanine 209, glycine 230 to valine 250, threonine 264 to methionine 284, phenylalanine 298 to phenylalanine 318, methionine 335 to leucine 355, glutamine 356 to aspartate 376, phenylalanine 397 to valine 417, isoleucine 438 to methionine 458, and valine 485 to methionine 505.

It belongs to the complex I subunit 4 family.

It localises to the cellular thylakoid membrane. It catalyses the reaction a plastoquinone + NADH + (n+1) H(+)(in) = a plastoquinol + NAD(+) + n H(+)(out). It carries out the reaction a plastoquinone + NADPH + (n+1) H(+)(in) = a plastoquinol + NADP(+) + n H(+)(out). Its function is as follows. NDH-1 shuttles electrons from NAD(P)H, via FMN and iron-sulfur (Fe-S) centers, to quinones in the respiratory chain. The immediate electron acceptor for the enzyme in this species is believed to be plastoquinone. Couples the redox reaction to proton translocation (for every two electrons transferred, four hydrogen ions are translocated across the cytoplasmic membrane), and thus conserves the redox energy in a proton gradient. The polypeptide is NAD(P)H-quinone oxidoreductase chain 4 (Prochlorococcus marinus (strain MIT 9313)).